The following is a 335-amino-acid chain: Holliday junction branch migration complex subunit RuvB (335 aa).

The segment at 1-181 (MTRILDNDLI…FGITGHMEYY (181 aa)) is large ATPase domain (RuvB-L). ATP is bound by residues Leu-20, Arg-21, Gly-62, Lys-65, Thr-66, Thr-67, 128-130 (EDF), Arg-171, Tyr-181, and Arg-218. Mg(2+) is bound at residue Thr-66. Positions 182 to 252 (QTADLTEIVE…ITDKALTMLD (71 aa)) are small ATPAse domain (RuvB-S). The segment at 255–335 (QEGLDYVDQK…GYPYEKTIKT (81 aa)) is head domain (RuvB-H). Residues Arg-291, Arg-310, Arg-312, and Arg-315 each coordinate DNA.

It belongs to the RuvB family. Homohexamer. Forms an RuvA(8)-RuvB(12)-Holliday junction (HJ) complex. HJ DNA is sandwiched between 2 RuvA tetramers; dsDNA enters through RuvA and exits via RuvB. An RuvB hexamer assembles on each DNA strand where it exits the tetramer. Each RuvB hexamer is contacted by two RuvA subunits (via domain III) on 2 adjacent RuvB subunits; this complex drives branch migration. In the full resolvosome a probable DNA-RuvA(4)-RuvB(12)-RuvC(2) complex forms which resolves the HJ.

It is found in the cytoplasm. It catalyses the reaction ATP + H2O = ADP + phosphate + H(+). In terms of biological role, the RuvA-RuvB-RuvC complex processes Holliday junction (HJ) DNA during genetic recombination and DNA repair, while the RuvA-RuvB complex plays an important role in the rescue of blocked DNA replication forks via replication fork reversal (RFR). RuvA specifically binds to HJ cruciform DNA, conferring on it an open structure. The RuvB hexamer acts as an ATP-dependent pump, pulling dsDNA into and through the RuvAB complex. RuvB forms 2 homohexamers on either side of HJ DNA bound by 1 or 2 RuvA tetramers; 4 subunits per hexamer contact DNA at a time. Coordinated motions by a converter formed by DNA-disengaged RuvB subunits stimulates ATP hydrolysis and nucleotide exchange. Immobilization of the converter enables RuvB to convert the ATP-contained energy into a lever motion, pulling 2 nucleotides of DNA out of the RuvA tetramer per ATP hydrolyzed, thus driving DNA branch migration. The RuvB motors rotate together with the DNA substrate, which together with the progressing nucleotide cycle form the mechanistic basis for DNA recombination by continuous HJ branch migration. Branch migration allows RuvC to scan DNA until it finds its consensus sequence, where it cleaves and resolves cruciform DNA. In Streptococcus equi subsp. equi (strain 4047), this protein is Holliday junction branch migration complex subunit RuvB.